Reading from the N-terminus, the 316-residue chain is Cell surface superoxide dismutase [Cu-Zn] 6 (316 aa).

Positions 1-18 (MIFIPIIILIYLVSIAAS) are cleaved as a signal peptide. Positions 78, 80, and 96 each coordinate Cu cation. Histidine 96 and aspartate 119 together coordinate Zn(2+). Asparagine 128 is a glycosylation site (N-linked (GlcNAc...) asparagine). Residue histidine 159 participates in Cu cation binding. Residues asparagine 162 and asparagine 240 are each glycosylated (N-linked (GlcNAc...) asparagine). A disordered region spans residues 243-263 (DNVYSPEETRPSDQNKKSHRH). A compositionally biased stretch (basic and acidic residues) spans 249-258 (EETRPSDQNK). N-linked (GlcNAc...) asparagine glycans are attached at residues asparagine 278 and asparagine 281. Serine 288 is lipidated: GPI-anchor amidated serine. Positions 289–316 (SDCLNDGMMVTGSVFGSLVLGIAAGIFV) are cleaved as a propeptide — removed in mature form.

The protein belongs to the Cu-Zn superoxide dismutase family. Cu cation is required as a cofactor. Requires Zn(2+) as cofactor. The GPI-anchor is attached to the protein in the endoplasmic reticulum and serves to target the protein to the cell surface. There, the glucosamine-inositol phospholipid moiety is cleaved off and the GPI-modified mannoprotein is covalently attached via its lipidless GPI glycan remnant to the 1,6-beta-glucan of the outer cell wall layer.

It localises to the secreted. The protein localises to the cell wall. The protein resides in the membrane. The enzyme catalyses 2 superoxide + 2 H(+) = H2O2 + O2. Its function is as follows. Superoxide dismutases serve to convert damaging superoxide radicals, a key form of ROS, to less damaging hydrogen peroxide that can be converted into water by catalase action. May be involved protection against extracellular stress. This chain is Cell surface superoxide dismutase [Cu-Zn] 6 (SOD6), found in Candida albicans (strain SC5314 / ATCC MYA-2876) (Yeast).